The chain runs to 373 residues: tRNA-specific 2-thiouridylase MnmA (373 aa).

ATP contacts are provided by residues 12-19 (GMSGGVDS) and Met-38. Residues 98-100 (NPD) form an interaction with target base in tRNA region. The active-site Nucleophile is Cys-103. A disulfide bridge connects residues Cys-103 and Cys-200. Residue Gly-127 participates in ATP binding. The interaction with tRNA stretch occupies residues 150 to 152 (KDQ). Catalysis depends on Cys-200, which acts as the Cysteine persulfide intermediate. The interaction with tRNA stretch occupies residues 312–313 (RY).

It belongs to the MnmA/TRMU family.

The protein resides in the cytoplasm. The catalysed reaction is S-sulfanyl-L-cysteinyl-[protein] + uridine(34) in tRNA + AH2 + ATP = 2-thiouridine(34) in tRNA + L-cysteinyl-[protein] + A + AMP + diphosphate + H(+). In terms of biological role, catalyzes the 2-thiolation of uridine at the wobble position (U34) of tRNA, leading to the formation of s(2)U34. The protein is tRNA-specific 2-thiouridylase MnmA of Streptococcus pneumoniae (strain 70585).